Here is a 402-residue protein sequence, read N- to C-terminus: Rubredoxin-oxygen oxidoreductase (402 aa).

Residues 30–216 (PMGTTYNAYL…KAIETLVGAG (187 aa)) are zinc metallo-hydrolase. Fe cation contacts are provided by H79, E81, D83, H146, D165, and H226. One can recognise a Flavodoxin-like domain in the interval 255–393 (VVIFYDSMWH…QLKTMAQTIA (139 aa)).

In the N-terminal section; belongs to the zinc metallo-hydrolase group 3 family. In terms of assembly, homodimer. Requires FMN as cofactor. Fe cation serves as cofactor.

Its pathway is energy metabolism; electron transfer. Its function is as follows. Catalyzes the four-electron reduction of one oxygen molecule to two water molecules. The sequence is that of Rubredoxin-oxygen oxidoreductase (roo) from Megalodesulfovibrio gigas (strain ATCC 19364 / DSM 1382 / NCIMB 9332 / VKM B-1759) (Desulfovibrio gigas).